A 907-amino-acid polypeptide reads, in one-letter code: Translation initiation factor IF-2 (907 aa).

The segment at 26 to 317 (DAGMKKSSSD…KPKSMQHGFD (292 aa)) is disordered. Composition is skewed to basic and acidic residues over residues 28 to 44 (GMKKSSSDQVSDEEKQK) and 101 to 248 (SAIE…DTDY). Basic residues predominate over residues 299–308 (KGGRKGKLSK). The tr-type G domain occupies 406–575 (PRAPVVTIMG…LLQAEVLELT (170 aa)). Residues 415–422 (GHVDHGKT) form a G1 region. 415 to 422 (GHVDHGKT) contributes to the GTP binding site. The segment at 440–444 (GITQH) is G2. The interval 461–464 (DTPG) is G3. Residues 461-465 (DTPGH) and 515-518 (NKID) contribute to the GTP site. The tract at residues 515–518 (NKID) is G4. Residues 551 to 553 (SAK) form a G5 region.

This sequence belongs to the TRAFAC class translation factor GTPase superfamily. Classic translation factor GTPase family. IF-2 subfamily.

It localises to the cytoplasm. One of the essential components for the initiation of protein synthesis. Protects formylmethionyl-tRNA from spontaneous hydrolysis and promotes its binding to the 30S ribosomal subunits. Also involved in the hydrolysis of GTP during the formation of the 70S ribosomal complex. This is Translation initiation factor IF-2 from Vibrio vulnificus (strain CMCP6).